The sequence spans 447 residues: Dihydrolipoyllysine-residue acetyltransferase component of pyruvate dehydrogenase complex (447 aa).

One can recognise a Lipoyl-binding domain in the interval 2-78 (PINITMPALS…KVNALIAVLA (77 aa)). The residue at position 43 (Lys43) is an N6-lipoyllysine. Residues 91 to 140 (GNGAAGAVPAPKPKETAETAPAAAPAPAAAPAPQAAAPASPAPADGEGKR) are disordered. Over residues 108 to 134 (ETAPAAAPAPAAAPAPQAAAPASPAPA) the composition is skewed to low complexity. Residues 142–179 (FSSPLARRLAKEAGIDLSAIAGSGPHGRVVKKDVETAV) enclose the Peripheral subunit-binding (PSBD) domain. His420 is an active-site residue.

This sequence belongs to the 2-oxoacid dehydrogenase family. As to quaternary structure, forms a 24-polypeptide structural core with octahedral symmetry. The cofactor is (R)-lipoate.

It carries out the reaction N(6)-[(R)-dihydrolipoyl]-L-lysyl-[protein] + acetyl-CoA = N(6)-[(R)-S(8)-acetyldihydrolipoyl]-L-lysyl-[protein] + CoA. Its function is as follows. The pyruvate dehydrogenase complex catalyzes the overall conversion of pyruvate to acetyl-CoA and CO(2). It contains multiple copies of three enzymatic components: pyruvate dehydrogenase (E1), dihydrolipoamide acetyltransferase (E2) and lipoamide dehydrogenase (E3). The chain is Dihydrolipoyllysine-residue acetyltransferase component of pyruvate dehydrogenase complex (pdhC) from Rhizobium meliloti (strain 1021) (Ensifer meliloti).